The following is a 393-amino-acid chain: Dual-specificity RNA methyltransferase RlmN (393 aa).

Glu115 (proton acceptor) is an active-site residue. The region spanning 121-365 (EEDRGTLCIS…APIRKTRGDD (245 aa)) is the Radical SAM core domain. A disulfide bridge connects residues Cys128 and Cys370. Residues Cys135, Cys139, and Cys142 each coordinate [4Fe-4S] cluster. S-adenosyl-L-methionine contacts are provided by residues 194 to 195 (GE), Ser226, 248 to 250 (SFH), and Asn327. Cys370 acts as the S-methylcysteine intermediate in catalysis.

It belongs to the radical SAM superfamily. RlmN family. It depends on [4Fe-4S] cluster as a cofactor.

It localises to the cytoplasm. The catalysed reaction is adenosine(2503) in 23S rRNA + 2 reduced [2Fe-2S]-[ferredoxin] + 2 S-adenosyl-L-methionine = 2-methyladenosine(2503) in 23S rRNA + 5'-deoxyadenosine + L-methionine + 2 oxidized [2Fe-2S]-[ferredoxin] + S-adenosyl-L-homocysteine. The enzyme catalyses adenosine(37) in tRNA + 2 reduced [2Fe-2S]-[ferredoxin] + 2 S-adenosyl-L-methionine = 2-methyladenosine(37) in tRNA + 5'-deoxyadenosine + L-methionine + 2 oxidized [2Fe-2S]-[ferredoxin] + S-adenosyl-L-homocysteine. In terms of biological role, specifically methylates position 2 of adenine 2503 in 23S rRNA and position 2 of adenine 37 in tRNAs. m2A2503 modification seems to play a crucial role in the proofreading step occurring at the peptidyl transferase center and thus would serve to optimize ribosomal fidelity. The polypeptide is Dual-specificity RNA methyltransferase RlmN (Ruegeria pomeroyi (strain ATCC 700808 / DSM 15171 / DSS-3) (Silicibacter pomeroyi)).